Reading from the N-terminus, the 158-residue chain is SsrA-binding protein (158 aa).

This sequence belongs to the SmpB family.

It localises to the cytoplasm. In terms of biological role, required for rescue of stalled ribosomes mediated by trans-translation. Binds to transfer-messenger RNA (tmRNA), required for stable association of tmRNA with ribosomes. tmRNA and SmpB together mimic tRNA shape, replacing the anticodon stem-loop with SmpB. tmRNA is encoded by the ssrA gene; the 2 termini fold to resemble tRNA(Ala) and it encodes a 'tag peptide', a short internal open reading frame. During trans-translation Ala-aminoacylated tmRNA acts like a tRNA, entering the A-site of stalled ribosomes, displacing the stalled mRNA. The ribosome then switches to translate the ORF on the tmRNA; the nascent peptide is terminated with the 'tag peptide' encoded by the tmRNA and targeted for degradation. The ribosome is freed to recommence translation, which seems to be the essential function of trans-translation. This chain is SsrA-binding protein, found in Caldicellulosiruptor bescii (strain ATCC BAA-1888 / DSM 6725 / KCTC 15123 / Z-1320) (Anaerocellum thermophilum).